A 408-amino-acid polypeptide reads, in one-letter code: Tryptophan--tRNA ligase, chloroplastic/mitochondrial (408 aa).

The N-terminal 52 residues, 1–52 (MGHATSLSHFLILSSSRFSRLGSLTRLLSKPTSLSGSFSSISVTGQGFRCCC), are a transit peptide targeting the chloroplast and mitochondrion. An N-acetylserine modification is found at serine 53. ATP is bound by residues glutamine 72 and 78-81 (HLGN). A 'HIGH' region motif is present at residues 73–81 (PTGSVHLGN). Aspartate 197 is an L-tryptophan binding site. ATP-binding positions include 209–211 (GED), valine 260, 269–273 (KMSKS), and lysine 272. The short motif at 269–273 (KMSKS) is the 'KMSKS' region element.

The protein belongs to the class-I aminoacyl-tRNA synthetase family.

Its subcellular location is the plastid. It localises to the chloroplast. It is found in the mitochondrion. The enzyme catalyses tRNA(Trp) + L-tryptophan + ATP = L-tryptophyl-tRNA(Trp) + AMP + diphosphate + H(+). The chain is Tryptophan--tRNA ligase, chloroplastic/mitochondrial from Arabidopsis thaliana (Mouse-ear cress).